We begin with the raw amino-acid sequence, 79 residues long: Conotoxin ArMSGL-0123 (79 aa).

The signal sequence occupies residues 1–20 (MSRLGIMVLTLLLLVFIVTS). Positions 21-44 (HQDAGEKQATKRAAVNFRWRRSFT) are excised as a propeptide. Cystine bridges form between Cys52–Cys64, Cys56–Cys73, and Cys63–Cys77. Leu78 is modified (leucine amide).

This sequence belongs to the conotoxin O3 superfamily. As to expression, expressed by the venom duct.

The protein localises to the secreted. This Conus arenatus (Sand-dusted cone) protein is Conotoxin ArMSGL-0123.